The sequence spans 551 residues: Transcription factor 7-like 1-B (551 aa).

Residues 1–11 are compositionally biased toward gly residues; it reads MPQLNGGGGDE. 3 disordered regions span residues 1 to 76, 298 to 326, and 392 to 525; these read MPQL…DLES, QEPNGELSPPVNTKSPGPNKKDEDKKPHI, and GWSA…PPSP. The segment covering 19-32 has biased composition (basic and acidic residues); the sequence is ISFKDEGEQEDKIS. The span at 46–61 shows a compositional bias: low complexity; sequence SSLVSESENNSSSSDS. A compositionally biased stretch (basic and acidic residues) spans 63–76; it reads QTERRPQPRADLES. A DNA-binding region (HMG box) is located at residues 326 to 394; sequence IKKPLNAFML…LHSQLYPGWS (69 aa). A compositionally biased stretch (low complexity) spans 449–468; sequence SPATPSAALASPAAPAATHS. Residues 469 to 478 show a composition bias toward polar residues; it reads EQAQPLSLTT. Over residues 493–505 the composition is skewed to low complexity; the sequence is SSSSSSSSSSSGL.

This sequence belongs to the TCF/LEF family. Interacts with ctnnb1.

It localises to the nucleus. Its function is as follows. Participates in the Wnt signaling pathway. Probably binds to DNA and acts as a repressor in the absence of ctnnb1, and possibly as an activator in its presence. Regulates anterior-posterior patterning in the neuroectoderm by repressing posterior neural fates. Also required for hindbrain morphogenesis. This is Transcription factor 7-like 1-B (tcf7l1b) from Danio rerio (Zebrafish).